We begin with the raw amino-acid sequence, 641 residues long: Chaperone protein DnaK (641 aa).

Thr-199 carries the phosphothreonine; by autocatalysis modification. The interval 603-627 (YGQQQAEGGAQAAGAAGGSSKADDA) is disordered. Residues 604–616 (GQQQAEGGAQAAG) are compositionally biased toward low complexity.

The protein belongs to the heat shock protein 70 family.

Acts as a chaperone. The polypeptide is Chaperone protein DnaK (Azoarcus sp. (strain BH72)).